Consider the following 137-residue polypeptide: Small ribosomal subunit protein uS9 (137 aa).

Positions 105 to 137 (LKAEGYLTRDPRAKERKKYGLHKARKAPQYSKR) are disordered. Positions 118–137 (KERKKYGLHKARKAPQYSKR) are enriched in basic residues.

It belongs to the universal ribosomal protein uS9 family.

The chain is Small ribosomal subunit protein uS9 (rpsI) from Synechocystis sp. (strain ATCC 27184 / PCC 6803 / Kazusa).